The sequence spans 167 residues: uncharacterized protein (167 aa).

This is an uncharacterized protein from Acanthamoeba polyphaga (Amoeba).